The chain runs to 399 residues: MKIGTPLSPSALRVMLLGAGELGKEVIIALQRLGVEVIAVDRYENAPGHQVAHRAHVISMTDGAALRQLVEQEKPHLIVPEIEAIATDMLVEIEAAGLAEVIPTARAAKLTMNREGIRRLAAEELGLPTSPYKFADSLAELQAAIDGGIGYPCIVKPTMSSSGKGQSLLRGPDDVQKAWDYAASGGRVNQGRVIVEGFIDFDYEITLLTVRARDTAGEVVTHFCEPIGHVQVGGDYVESWQPQAMSPAALQRAQEIAAAVTGNLGGRGLFGVELFVKGDMVWFSEVSPRPHDTGLVTLCSQRFSEFELHARAILGLPVDTALREAGASAVIYGGMEEKGIAFAGLEEALAVPRSDLRLFGKPESFKKRRMGVAVANGESTDQARERAKLAASKVRPTRT.

N(1)-(5-phospho-beta-D-ribosyl)glycinamide is bound by residues 21 to 22 (EL) and Glu81. ATP is bound by residues Arg114, Lys156, 161–166 (SSGKGQ), 196–199 (EGFI), and Glu204. In terms of domain architecture, ATP-grasp spans 119 to 314 (RLAAEELGLP…EFELHARAIL (196 aa)). Positions 273 and 285 each coordinate Mg(2+). N(1)-(5-phospho-beta-D-ribosyl)glycinamide-binding positions include Asp292, Lys361, and 368–369 (RR). Positions 370–399 (MGVAVANGESTDQARERAKLAASKVRPTRT) are disordered.

This sequence belongs to the PurK/PurT family. As to quaternary structure, homodimer.

It carries out the reaction N(1)-(5-phospho-beta-D-ribosyl)glycinamide + formate + ATP = N(2)-formyl-N(1)-(5-phospho-beta-D-ribosyl)glycinamide + ADP + phosphate + H(+). The protein operates within purine metabolism; IMP biosynthesis via de novo pathway; N(2)-formyl-N(1)-(5-phospho-D-ribosyl)glycinamide from N(1)-(5-phospho-D-ribosyl)glycinamide (formate route): step 1/1. Its function is as follows. Involved in the de novo purine biosynthesis. Catalyzes the transfer of formate to 5-phospho-ribosyl-glycinamide (GAR), producing 5-phospho-ribosyl-N-formylglycinamide (FGAR). Formate is provided by PurU via hydrolysis of 10-formyl-tetrahydrofolate. The protein is Formate-dependent phosphoribosylglycinamide formyltransferase of Dechloromonas aromatica (strain RCB).